A 100-amino-acid chain; its full sequence is Urease subunit gamma 2 (100 aa).

Belongs to the urease gamma subunit family. Heterotrimer of UreA (gamma), UreB (beta) and UreC (alpha) subunits. Three heterotrimers associate to form the active enzyme.

It localises to the cytoplasm. It catalyses the reaction urea + 2 H2O + H(+) = hydrogencarbonate + 2 NH4(+). It functions in the pathway nitrogen metabolism; urea degradation; CO(2) and NH(3) from urea (urease route): step 1/1. The chain is Urease subunit gamma 2 from Psychrobacter cryohalolentis (strain ATCC BAA-1226 / DSM 17306 / VKM B-2378 / K5).